A 301-amino-acid polypeptide reads, in one-letter code: tRNA pseudouridine synthase B (301 aa).

The active-site Nucleophile is D38.

Belongs to the pseudouridine synthase TruB family. Type 1 subfamily.

The enzyme catalyses uridine(55) in tRNA = pseudouridine(55) in tRNA. Responsible for synthesis of pseudouridine from uracil-55 in the psi GC loop of transfer RNAs. In Ehrlichia canis (strain Jake), this protein is tRNA pseudouridine synthase B.